The chain runs to 156 residues: Small ribosomal subunit protein uS7 (156 aa).

The protein belongs to the universal ribosomal protein uS7 family. As to quaternary structure, part of the 30S ribosomal subunit. Contacts proteins S9 and S11.

One of the primary rRNA binding proteins, it binds directly to 16S rRNA where it nucleates assembly of the head domain of the 30S subunit. Is located at the subunit interface close to the decoding center, probably blocks exit of the E-site tRNA. The polypeptide is Small ribosomal subunit protein uS7 (Prochlorococcus marinus (strain MIT 9303)).